We begin with the raw amino-acid sequence, 60 residues long: Protein translocase subunit SecE (60 aa).

Residues 31–51 (IIVVSTVIFFLVFFYALDIGI) form a helical membrane-spanning segment.

Belongs to the SecE/SEC61-gamma family. As to quaternary structure, component of the Sec protein translocase complex. Heterotrimer consisting of SecY, SecE and SecG subunits. The heterotrimers can form oligomers, although 1 heterotrimer is thought to be able to translocate proteins. Interacts with the ribosome. Interacts with SecDF, and other proteins may be involved. Interacts with SecA.

The protein resides in the cell membrane. Essential subunit of the Sec protein translocation channel SecYEG. Clamps together the 2 halves of SecY. May contact the channel plug during translocation. This is Protein translocase subunit SecE from Staphylococcus epidermidis (strain ATCC 35984 / DSM 28319 / BCRC 17069 / CCUG 31568 / BM 3577 / RP62A).